The sequence spans 355 residues: 6-aminohexanoate-oligomer endohydrolase (355 aa).

Thr267 serves as the catalytic Nucleophile.

Belongs to the peptidase S58 family. Heterotetramer composed of 4 alpha/beta heterodimers. Expressed as an inactive precursor that is cleaved autocatalytically at Asn266/Thr267 to generate an active enzyme composed of an alpha subunit and a beta subunit.

It carries out the reaction [N-(6-aminohexanoyl)]n + H2O = [N-(6-aminohexanoyl)]n-x + [N-(6-aminohexanoyl)]x.. The protein operates within xenobiotic degradation; nylon-6 oligomer degradation. Involved in the degradation of nylon-6 oligomers. Degrades cyclic and linear oligomers of 6-aminohexanoate (Ahx) with a degree of polymerization greater than three by an endo-type mode. Cannot use Ahx cyclic dimer or the Ahx linear dimer. This chain is 6-aminohexanoate-oligomer endohydrolase, found in Kocuria sp. (strain KY2).